The following is a 256-amino-acid chain: Thiazole synthase (256 aa).

Lys95 serves as the catalytic Schiff-base intermediate with DXP. Residues Gly156, 182 to 183 (AG), and 204 to 205 (NT) each bind 1-deoxy-D-xylulose 5-phosphate.

The protein belongs to the ThiG family. As to quaternary structure, homotetramer. Forms heterodimers with either ThiH or ThiS.

The protein resides in the cytoplasm. The enzyme catalyses [ThiS sulfur-carrier protein]-C-terminal-Gly-aminoethanethioate + 2-iminoacetate + 1-deoxy-D-xylulose 5-phosphate = [ThiS sulfur-carrier protein]-C-terminal Gly-Gly + 2-[(2R,5Z)-2-carboxy-4-methylthiazol-5(2H)-ylidene]ethyl phosphate + 2 H2O + H(+). Its pathway is cofactor biosynthesis; thiamine diphosphate biosynthesis. Its function is as follows. Catalyzes the rearrangement of 1-deoxy-D-xylulose 5-phosphate (DXP) to produce the thiazole phosphate moiety of thiamine. Sulfur is provided by the thiocarboxylate moiety of the carrier protein ThiS. In vitro, sulfur can be provided by H(2)S. This is Thiazole synthase from Enterobacter sp. (strain 638).